We begin with the raw amino-acid sequence, 355 residues long: Uroporphyrinogen decarboxylase (355 aa).

Substrate contacts are provided by residues 38–42 (RQAGR), Asp87, Tyr162, Ser217, and His331.

This sequence belongs to the uroporphyrinogen decarboxylase family. Homodimer.

It is found in the cytoplasm. The catalysed reaction is uroporphyrinogen III + 4 H(+) = coproporphyrinogen III + 4 CO2. It functions in the pathway porphyrin-containing compound metabolism; protoporphyrin-IX biosynthesis; coproporphyrinogen-III from 5-aminolevulinate: step 4/4. Catalyzes the decarboxylation of four acetate groups of uroporphyrinogen-III to yield coproporphyrinogen-III. In Streptomyces coelicolor (strain ATCC BAA-471 / A3(2) / M145), this protein is Uroporphyrinogen decarboxylase.